Reading from the N-terminus, the 284-residue chain is WUSCHEL-related homeobox 10 (284 aa).

The disordered stretch occupies residues Met-1–Arg-43. Positions Pro-39–Ala-103 form a DNA-binding region, homeobox; WUS-type.

Belongs to the WUS homeobox family.

Its subcellular location is the nucleus. In terms of biological role, transcription factor which may be involved in developmental processes. This chain is WUSCHEL-related homeobox 10 (WOX10), found in Oryza sativa subsp. japonica (Rice).